The primary structure comprises 156 residues: Transcriptional repressor NrdR (156 aa).

A zinc finger spans residues cysteine 3–cysteine 34. The ATP-cone domain maps to leucine 49 to aspartate 139.

The protein belongs to the NrdR family. It depends on Zn(2+) as a cofactor.

In terms of biological role, negatively regulates transcription of bacterial ribonucleotide reductase nrd genes and operons by binding to NrdR-boxes. The chain is Transcriptional repressor NrdR from Desulfatibacillum aliphaticivorans.